Reading from the N-terminus, the 231-residue chain is 7-cyano-7-deazaguanine synthase (231 aa).

An ATP-binding site is contributed by 7–17; the sequence is LSSGLDSVAAL. Cys-195, Cys-203, Cys-206, and Cys-209 together coordinate Zn(2+).

The protein belongs to the QueC family. Requires Zn(2+) as cofactor.

It carries out the reaction 7-carboxy-7-deazaguanine + NH4(+) + ATP = 7-cyano-7-deazaguanine + ADP + phosphate + H2O + H(+). Its pathway is purine metabolism; 7-cyano-7-deazaguanine biosynthesis. Its function is as follows. Catalyzes the ATP-dependent conversion of 7-carboxy-7-deazaguanine (CDG) to 7-cyano-7-deazaguanine (preQ(0)). The polypeptide is 7-cyano-7-deazaguanine synthase (Methanosarcina mazei (strain ATCC BAA-159 / DSM 3647 / Goe1 / Go1 / JCM 11833 / OCM 88) (Methanosarcina frisia)).